The sequence spans 343 residues: Heat-inducible transcription repressor HrcA (343 aa).

Belongs to the HrcA family.

Functionally, negative regulator of class I heat shock genes (grpE-dnaK-dnaJ and groELS operons). Prevents heat-shock induction of these operons. This chain is Heat-inducible transcription repressor HrcA, found in Thermoanaerobacter pseudethanolicus (strain ATCC 33223 / 39E) (Clostridium thermohydrosulfuricum).